We begin with the raw amino-acid sequence, 99 residues long: High mobility group nucleosome-binding domain-containing protein 3 (99 aa).

Basic and acidic residues-rich tracts occupy residues 1–25 (MPKR…EPTR), 39–53 (PEPK…KEPG), and 62–72 (GKKEEKQEAGK). The interval 1–99 (MPKRKSPENT…KTESVDNEGE (99 aa)) is disordered. S6 is modified (phosphoserine). Phosphothreonine is present on T10. Phosphoserine is present on residues S78 and S93. Residues 81–93 (GETKAEEAQKTES) show a composition bias toward basic and acidic residues.

It belongs to the HMGN family. Interacts with the ligand binding domain of the thyroid receptor (TR) (in vitro). Requires the presence of thyroid hormone for its interaction. Interacts with transcriptional regulator SEHBP. Interacts with nucleosomes. In terms of tissue distribution, expressed in kidney, lung, pancreas, testis, skeletal muscle, heart, thyroid gland, pituitary gland, prostate and uterus. Low expression in liver, spleen, placenta and ovaries.

The protein localises to the nucleus. Functionally, binds to nucleosomes, regulating chromatin structure and consequently, chromatin-dependent processes such as transcription, DNA replication and DNA repair. Affects both insulin and glucagon levels and modulates the expression of pancreatic genes involved in insulin secretion. Regulates the expression of the glucose transporter SLC2A2 by binding specifically to its promoter region and recruiting PDX1 and additional transcription factors. Regulates the expression of SLC6A9, a glycine transporter which regulates the glycine concentration in synaptic junctions in the central nervous system, by binding to its transcription start site. May play a role in ocular development and astrocyte function. This is High mobility group nucleosome-binding domain-containing protein 3 (HMGN3) from Homo sapiens (Human).